A 353-amino-acid chain; its full sequence is Nif-specific regulatory protein (353 aa).

One can recognise a Sigma-54 factor interaction domain in the interval 12–240 (IVGESAALKE…LQNCTQRTAT (229 aa)). ATP-binding positions include 40–47 (GESGTGKE) and 103–112 (AHGGTLLLDE). Residues 325 to 344 (QAKAARLLGRTPRQVGYSLR) constitute a DNA-binding region (H-T-H motif).

Interacts with sigma-54.

Required for activation of most nif operons, which are directly involved in nitrogen fixation. The protein is Nif-specific regulatory protein (nifA) of Rhizobium leguminosarum bv. trifolii.